The sequence spans 203 residues: MGCVCSKQLEGRRQEDISLLASQTFFSEAEVEVLHGLFIKLTSCLSNDNLLTKEKFQFILIKNTKKRSLSAERIFGLFDMRNDGAIDFGEFVHTLNIFHPNSSPRDKAIFAFRLYDTRETGFIEPEEVKEMIIDVLEESELMLSESIIDSIVSKTFEEADWKKDGIIDLEEWENFVATYPLTLKNMTIPFLKDIPRIFPTFLR.

Glycine 2 carries N-myristoyl glycine lipidation. EF-hand domains are found at residues 30–65, 66–101, 103–138, and 147–182; these read EVEV…KNTK, KRSL…FHPN, SPRD…VLEE, and IIDS…YPLT.

This sequence belongs to the calcineurin regulatory subunit family. Homodimer. Interacts with PP2CA, CIPK2, CIPK11, CIPK23 and CIPK24. Both N-myristoylation and calcium-mediated conformational changes are essential for its function. As to expression, expressed in green tissues, but not in the roots.

The protein localises to the cytoplasm. Its subcellular location is the nucleus. Acts as a calcium sensor. CBL proteins interact with CIPK serine-threonine protein kinases. Binding of a CBL protein to the regulatory NAF domain of a CIPK protein lead to the activation of the kinase in a calcium-dependent manner. May function as a positive regulator of salt or drought responses. This Arabidopsis thaliana (Mouse-ear cress) protein is Calcineurin B-like protein 5 (CBL5).